The following is a 410-amino-acid chain: Trifunctional NAD biosynthesis/regulator protein NadR (410 aa).

Residues 7 to 62 (LKTAIKQQGCTLQQVADASGMTKGYLSQLLNAKIKSPSAQKLEALHRFLGLEFPRQ) form the HTH cro/C1-type domain. Positions 18 to 37 (LQQVADASGMTKGYLSQLLN) form a DNA-binding region, H-T-H motif. A nicotinamide mononucleotide adenylyltransferase region spans residues 63 to 229 (KKTIGVVFGK…EYIPTEVKPF (167 aa)). NAD(+) contacts are provided by residues 70–73 (FGKF), H77, R104, 144–157 (EEGM…WDVW), 177–179 (TSE), 204–206 (MSI), 259–261 (SAW), and 294–297 (YIDF). Residues 230–410 (FVRTVAILGG…LVREMMGEQR (181 aa)) form a ribosylnicotinamide kinase region.

The protein in the central section; belongs to the bacterial NMN adenylyltransferase family. This sequence in the C-terminal section; belongs to the bacterial RNK family. Homotetramer.

Its subcellular location is the cell membrane. It localises to the cytoplasm. It catalyses the reaction beta-nicotinamide D-ribonucleotide + ATP + H(+) = diphosphate + NAD(+). It carries out the reaction beta-nicotinamide D-riboside + ATP = beta-nicotinamide D-ribonucleotide + ADP + H(+). It functions in the pathway cofactor biosynthesis; NAD(+) biosynthesis [regulation]. Its pathway is cofactor biosynthesis; NAD(+) biosynthesis; NAD(+) from nicotinamide D-ribonucleotide: step 1/1. Its activity is regulated as follows. Feed-back regulated by NAD. A high level of NAD causes NadR to lose enzymatic activity and repress several NAD synthetic genes; conversely, a low NAD level activates the assimilatory enzymatic activities and leads to derepression of biosynthetic genes. This enzyme has three activities: DNA binding, nicotinamide mononucleotide (NMN) adenylyltransferase and ribosylnicotinamide (RN) kinase. The DNA-binding domain binds to the nadB operator sequence in an NAD- and ATP-dependent manner. As NAD levels increase within the cell, the affinity of NadR for the nadB operator regions of nadA, nadB, and pncB increases, repressing the transcription of these genes. The RN kinase activity catalyzes the phosphorylation of RN to form nicotinamide ribonucleotide. The NMN adenylyltransferase activity catalyzes the transfer of the AMP moiety of ATP to nicotinamide ribonucleotide to form NAD(+). The NMN adenylyltransferase domain also functions as the NAD and ATP sensor. In Escherichia coli (strain K12), this protein is Trifunctional NAD biosynthesis/regulator protein NadR (nadR).